Here is a 312-residue protein sequence, read N- to C-terminus: Porphobilinogen deaminase (312 aa).

Cys-235 bears the S-(dipyrrolylmethanemethyl)cysteine mark.

The protein belongs to the HMBS family. Monomer. The cofactor is dipyrromethane.

It carries out the reaction 4 porphobilinogen + H2O = hydroxymethylbilane + 4 NH4(+). It functions in the pathway porphyrin-containing compound metabolism; protoporphyrin-IX biosynthesis; coproporphyrinogen-III from 5-aminolevulinate: step 2/4. Its function is as follows. Tetrapolymerization of the monopyrrole PBG into the hydroxymethylbilane pre-uroporphyrinogen in several discrete steps. This chain is Porphobilinogen deaminase, found in Mycolicibacterium gilvum (strain PYR-GCK) (Mycobacterium gilvum (strain PYR-GCK)).